The primary structure comprises 313 residues: Short-chain dehydrogenase/reductase family 9C member 7 (313 aa).

Residue 29–53 participates in NADP(+) binding; the sequence is FITGCDSGFGNLLAKQLVDRGMQVL. Ser-160 contacts substrate. Catalysis depends on Tyr-172, which acts as the Proton acceptor. At Ser-185 the chain carries Phosphoserine.

It belongs to the short-chain dehydrogenases/reductases (SDR) family. Expressed in the skin. Expressed in granular and cornified layers of the epidermis (at protein level). Highly expressed in liver.

The protein resides in the cytoplasm. It carries out the reaction a N-[omega-(9R,10R)-epoxy-(13R)-hydroxy-(11E)-octadecenoyloxy]acyl-beta-D-glucosyl-(1&lt;-&gt;1)-sphing-4E-enine + NAD(+) = a N-[omega-(9R,10R)-epoxy-13-oxo-(11E)-octadecenoyloxy]acyl-beta-D-glucosyl-(1&lt;-&gt;1)-sphing-4E-enine + NADH + H(+). The catalysed reaction is a N-[omega-(9R,10R)-epoxy-(13R)-hydroxy-(11E)-octadecenoyloxy]-acylsphing-4E-enine + NAD(+) = a N-[omega-(9R,10R)-epoxy-13-oxo-(11E)-octadecenoyloxy]-acylsphing-4E-enine + NADH + H(+). Functionally, plays a crucial role in the formation of the epidermal permeability barrier. Catalyzes the NAD+-dependent dehydrogenation of the linoleate 9,10-trans-epoxy-11E-13-alcohol esterified in omega-O-acylceramides (such as in N-[omega-(9R,10R)-epoxy-(13R)-hydroxy-(11E)-octadecenoyloxy]-acylsphing-4E-enine) to the corresponding 13-ketone, the reactive moiety required for binding of epidermal ceramides to proteins. Displays weak conversion of all-trans-retinal to all-trans-retinol in the presence of NADH. Has apparently no steroid dehydrogenase activity. This Homo sapiens (Human) protein is Short-chain dehydrogenase/reductase family 9C member 7 (SDR9C7).